Here is a 147-residue protein sequence, read N- to C-terminus: Probable cytidine deaminase (147 aa).

A CMP/dCMP-type deaminase domain is found at 4–130 (EELEKCIDAA…KLLPGLFSQE (127 aa)). 45 to 51 (NVENSSY) lines the substrate pocket. Cys-56 contacts Zn(2+). Glu-58 acts as the Proton donor in catalysis. The Zn(2+) site is built by Cys-90 and Cys-93.

Belongs to the cytidine and deoxycytidylate deaminase family. Zn(2+) serves as cofactor.

It carries out the reaction cytidine + H2O + H(+) = uridine + NH4(+). The enzyme catalyses 2'-deoxycytidine + H2O + H(+) = 2'-deoxyuridine + NH4(+). In terms of biological role, this enzyme scavenges exogenous and endogenous cytidine and 2'-deoxycytidine for UMP synthesis. In Dictyostelium discoideum (Social amoeba), this protein is Probable cytidine deaminase (cda).